Here is a 229-residue protein sequence, read N- to C-terminus: Glutathione S-transferase 1 (229 aa).

Residues S2 to A83 enclose the GST N-terminal domain. Glutathione contacts are provided by residues H41–K42, K54–M55, and E67–S68. The 131-residue stretch at G93–F223 folds into the GST C-terminal domain.

It belongs to the GST superfamily. Phi family.

The catalysed reaction is RX + glutathione = an S-substituted glutathione + a halide anion + H(+). Conjugation of reduced glutathione to a wide number of exogenous and endogenous hydrophobic electrophiles. In Triticum aestivum (Wheat), this protein is Glutathione S-transferase 1 (GSTA1).